We begin with the raw amino-acid sequence, 39 residues long: MTIDRTYPIFTVRWLTVHGLAVPTVSFLGSISAMQFIQR.

Residues 14–30 form a helical membrane-spanning segment; sequence WLTVHGLAVPTVSFLGS. A heme-binding site is contributed by His-18.

It belongs to the PsbE/PsbF family. In terms of assembly, heterodimer of an alpha subunit and a beta subunit. PSII is composed of 1 copy each of membrane proteins PsbA, PsbB, PsbC, PsbD, PsbE, PsbF, PsbH, PsbI, PsbJ, PsbK, PsbL, PsbM, PsbT, PsbX, PsbY, PsbZ, Psb30/Ycf12, at least 3 peripheral proteins of the oxygen-evolving complex and a large number of cofactors. It forms dimeric complexes. It depends on heme b as a cofactor.

The protein resides in the plastid. Its subcellular location is the chloroplast thylakoid membrane. Its function is as follows. This b-type cytochrome is tightly associated with the reaction center of photosystem II (PSII). PSII is a light-driven water:plastoquinone oxidoreductase that uses light energy to abstract electrons from H(2)O, generating O(2) and a proton gradient subsequently used for ATP formation. It consists of a core antenna complex that captures photons, and an electron transfer chain that converts photonic excitation into a charge separation. The sequence is that of Cytochrome b559 subunit beta from Lactuca sativa (Garden lettuce).